Here is a 1562-residue protein sequence, read N- to C-terminus: DNA-directed RNA polymerase subunit beta'' (1562 aa).

Positions 1–22 (MVKKKKFKTKNIQNPPFSSQNS) are disordered. The segment covering 11 to 22 (NIQNPPFSSQNS) has biased composition (polar residues). Zn(2+)-binding residues include Cys-275, Cys-338, Cys-345, and Cys-348.

It belongs to the RNA polymerase beta' chain family. RpoC2 subfamily. As to quaternary structure, in plastids the minimal PEP RNA polymerase catalytic core is composed of four subunits: alpha, beta, beta', and beta''. When a (nuclear-encoded) sigma factor is associated with the core the holoenzyme is formed, which can initiate transcription. It depends on Zn(2+) as a cofactor.

Its subcellular location is the plastid. It is found in the chloroplast. The catalysed reaction is RNA(n) + a ribonucleoside 5'-triphosphate = RNA(n+1) + diphosphate. DNA-dependent RNA polymerase catalyzes the transcription of DNA into RNA using the four ribonucleoside triphosphates as substrates. The chain is DNA-directed RNA polymerase subunit beta'' from Chlorella vulgaris (Green alga).